The chain runs to 90 residues: Trp-8 progonadoliberin (90 aa).

An N-terminal signal peptide occupies residues 1 to 24; the sequence is MSRHVTVVLLLAVVLLLSSHMSHG. The residue at position 25 (glutamine 25) is a Pyrrolidone carboxylic acid. The residue at position 34 (glycine 34) is a Glycine amide.

It belongs to the GnRH family. In terms of tissue distribution, expressed in forebrain but not in testis, ovary, kidney and liver.

It is found in the secreted. Functionally, stimulates the secretion of gonadotropins. In Rana dybowskii (Dybovsky's frog), this protein is Trp-8 progonadoliberin.